The sequence spans 77 residues: Apelin (77 aa).

An N-terminal signal peptide occupies residues 1 to 22 (MNLRLCVQALLLLWLSLTAVCG). Residues 23-41 (GSLMPLPDGNGLEDGNVRH) constitute a propeptide that is removed on maturation. Positions 43 to 77 (VQPRGSRNGPGPWQGGRRKFRRQRPRLSHKGPMPF) are disordered. Over residues 58–71 (GRRKFRRQRPRLSH) the composition is skewed to basic residues.

It belongs to the apelin family. Post-translationally, several active peptides may be produced by proteolytic processing of the peptide precursor. In terms of tissue distribution, expressed in the brain with highest levels in the frontal cortex, thalamus, hypothalamus and midbrain. Secreted by the mammary gland into the colostrum and the milk.

It localises to the secreted. The protein resides in the extracellular space. Functionally, peptide hormone that functions as endogenous ligand for the G-protein-coupled apelin receptor (APLNR/APJ), that plays a role in cadiovascular homeostasis. Functions as a balanced agonist activating both G(i) protein pathway and beta-arrestin pathway of APLNR. Downstream G proteins activation, apelin can inhibit cAMP production and activate key intracellular effectors such as ERKs. On the other hand, APLNR activation induces beta-arrestin recruitment to the membrane leading to desensitization and internalization of the receptor. Apelin blunts cardiac hypertrophic induction from APLNR on response to pathological stimuli, but also induces myocardial hypertrophy under normal conditions. Apelin-36 dissociates more hardly than (pyroglu)apelin-13 from APLNR. Involved in the regulation of cardiac precursor cell movements during gastrulation and heart morphogenesis. Has an inhibitory effect on cytokine production in response to T-cell receptor/CD3 cross-linking; the oral intake of apelin in the colostrum and the milk might therefore modulate immune responses in neonates. Plays a role in early coronary blood vessels formation. Mediates myocardial contractility in an ERK1/2-dependent manner. May also have a role in the central control of body fluid homeostasis by influencing vasopressin release and drinking behavior. In terms of biological role, (Microbial infection) Endogenous ligand for the apelin receptor (APLNR), an alternative coreceptor with CD4 for HIV-1 infection. Inhibits HIV-1 entry in cells coexpressing CD4 and APLNR. Apelin-36 has a greater inhibitory activity on HIV infection than other synthetic apelin derivatives. The sequence is that of Apelin from Homo sapiens (Human).